The chain runs to 591 residues: Chaperone protein DnaK (591 aa).

Thr175 carries the phosphothreonine; by autocatalysis modification. The segment covering 568–577 has biased composition (low complexity); that stretch reads AQAAEFANKQ. The tract at residues 568–591 is disordered; sequence AQAAEFANKQNESDPNNNSSEQNN. Residues 580–591 are compositionally biased toward polar residues; the sequence is SDPNNNSSEQNN.

The protein belongs to the heat shock protein 70 family.

In terms of biological role, acts as a chaperone. In Mycoplasma mycoides subsp. mycoides SC (strain CCUG 32753 / NCTC 10114 / PG1), this protein is Chaperone protein DnaK.